A 155-amino-acid polypeptide reads, in one-letter code: Putative pre-16S rRNA nuclease (155 aa).

It belongs to the YqgF nuclease family.

The protein resides in the cytoplasm. Could be a nuclease involved in processing of the 5'-end of pre-16S rRNA. The chain is Putative pre-16S rRNA nuclease from Xanthomonas campestris pv. campestris (strain B100).